A 402-amino-acid chain; its full sequence is Dynactin subunit 2 (402 aa).

The interval 1–24 (MADPKYADLPGIARNEPDVYETSD) is disordered. Alanine 2 carries the post-translational modification N-acetylalanine. Tyrosine 6 is modified (phosphotyrosine). Serine 83 carries the post-translational modification Phosphoserine. Tyrosine 86 carries the post-translational modification Phosphotyrosine. Positions 100–130 (QQKYQRLLHEVQELTTEVEKIKTTVKESATE) form a coiled coil. Phosphothreonine is present on residues threonine 134 and threonine 199. The interval 185–205 (KSSKGSSGGKSTGGTPPDSSL) is disordered. Residues 215-247 (EQDKFSQAAKVAELEKRLTELEATVRCDQDAQN) are a coiled coil. Serine 321 carries the post-translational modification Phosphoserine.

This sequence belongs to the dynactin subunit 2 family. Subunit of dynactin, a multiprotein complex part of a tripartite complex with dynein and a adapter, such as BICDL1, BICD2 or HOOK3. The dynactin complex is built around ACTR1A/ACTB filament and consists of an actin-related filament composed of a shoulder domain, a pointed end and a barbed end. Its length is defined by its flexible shoulder domain. The soulder is composed of 2 DCTN1 subunits, 4 DCTN2 and 2 DCTN3. The 4 DCNT2 (via N-terminus) bind the ACTR1A filament and act as molecular rulers to determine the length. The pointed end is important for binding dynein-dynactin cargo adapters and consists of 4 subunits: ACTR10, DCNT4, DCTN5 and DCTN6. The barbed end is composed of a CAPZA1:CAPZB heterodimers, which binds ACTR1A/ACTB filament and dynactin and stabilizes dynactin. Interacts with BICD2 and CEP135. Interacts with DYNAP. Interacts with ECPAS. Interacts with MAPRE1.

Its subcellular location is the cytoplasm. The protein resides in the cytoskeleton. It localises to the microtubule organizing center. The protein localises to the centrosome. It is found in the membrane. Its function is as follows. Part of the dynactin complex that activates the molecular motor dynein for ultra-processive transport along microtubules. In the dynactin soulder domain, binds the ACTR1A filament and acts as a molecular ruler to determine the length. Modulates cytoplasmic dynein binding to an organelle, and plays a role in prometaphase chromosome alignment and spindle organization during mitosis. Involved in anchoring microtubules to centrosomes. May play a role in synapse formation during brain development. The chain is Dynactin subunit 2 (Dctn2) from Rattus norvegicus (Rat).